The following is a 123-amino-acid chain: Large ribosomal subunit protein eL8 (123 aa).

This sequence belongs to the eukaryotic ribosomal protein eL8 family. Part of the 50S ribosomal subunit. Probably part of the RNase P complex.

The protein localises to the cytoplasm. Its function is as follows. Multifunctional RNA-binding protein that recognizes the K-turn motif in ribosomal RNA, the RNA component of RNase P, box H/ACA, box C/D and box C'/D' sRNAs. The chain is Large ribosomal subunit protein eL8 from Methanopyrus kandleri (strain AV19 / DSM 6324 / JCM 9639 / NBRC 100938).